A 530-amino-acid polypeptide reads, in one-letter code: Poly(U)-binding-splicing factor PUF60 (530 aa).

The segment at 1–487 is inhibits homodimerization; that stretch reads MATATIALGT…EDAEIIVKIF (487 aa). Lysine 14 participates in a covalent cross-link: Glycyl lysine isopeptide (Lys-Gly) (interchain with G-Cter in SUMO2). Position 31 is a phosphothreonine (threonine 31). The tract at residues 48 to 530 is inhibits transcriptional repression, interaction with ERCC3 and apoptosis induction; it reads QSIKSVLVKQ…ERFDNSDLSA (483 aa). Lysine 51 participates in a covalent cross-link: Glycyl lysine isopeptide (Lys-Gly) (interchain with G-Cter in SUMO2). The residue at position 83 (serine 83) is a Phosphoserine. 2 consecutive RRM domains span residues 100–178 and 197–275; these read CRVY…RPSN and NRIY…KAVT. Serine 215 carries the post-translational modification Phosphoserine. Lysine 222 is subject to N6-acetyllysine. Position 285 is a phosphothreonine (threonine 285). The disordered stretch occupies residues 387–408; the sequence is KKEKEEEELFPESERPEMLSEQ. A Glycyl lysine isopeptide (Lys-Gly) (interchain with G-Cter in SUMO2) cross-link involves residue lysine 390. Positions 398–408 are enriched in basic and acidic residues; that stretch reads ESERPEMLSEQ. Lysine 425 bears the N6-acetyllysine mark. Lysine 429 participates in a covalent cross-link: Glycyl lysine isopeptide (Lys-Gly) (interchain with G-Cter in SUMO2). Residues 433–520 enclose the RRM 3; atypical domain; sequence TVMVLRNMVD…RKVVAEVYDQ (88 aa).

The protein belongs to the RRM half pint family. As to quaternary structure, homodimer. Associates with the spliceosome. Found in a complex with RO60 and Y5 RNA. Found in a complex with FUBP1 and far upstream element (FUSE) DNA segment. Interacts directly with ERCC3. Interacts with CDK7 and GTF2H1. Interacts with SRSF11/P54. Interacts with ARGLU1; interaction may be involved in ARGLU1-mediated modulation of alternative splicing.

Its subcellular location is the nucleus. Functionally, DNA- and RNA-binding protein, involved in several nuclear processes such as pre-mRNA splicing, apoptosis and transcription regulation. In association with FUBP1 regulates MYC transcription at the P2 promoter through the core-TFIIH basal transcription factor. Acts as a transcriptional repressor through the core-TFIIH basal transcription factor. Represses FUBP1-induced transcriptional activation but not basal transcription. Decreases ERCC3 helicase activity. Is also involved in pre-mRNA splicing. Promotes splicing of an intron with weak 3'-splice site and pyrimidine tract in a cooperative manner with U2AF2. Involved in apoptosis induction when overexpressed in HeLa cells. Modulates alternative splicing of several mRNAs. Binds to relaxed DNA of active promoter regions. Binds to the pyrimidine tract and 3'-splice site regions of pre-mRNA; binding is enhanced in presence of U2AF2. Binds to Y5 RNA in association with RO60. Binds to poly(U) RNA. The sequence is that of Poly(U)-binding-splicing factor PUF60 from Bos taurus (Bovine).